Consider the following 369-residue polypeptide: Putative FAD-dependent oxidoreductase LodB (369 aa).

FAD contacts are provided by residues 10–14 (GGGPA) and Arg-103.

The cofactor is FAD.

The protein resides in the cytoplasm. Is required for lysine-epsilon oxidase (LOD) activity in M.mediterranea. May be involved in the generation of the quinonic cofactor of LodA, leading to the active form of LodA containing a tyrosine-derived quinone cofactor. The chain is Putative FAD-dependent oxidoreductase LodB (lodB) from Marinomonas mediterranea (strain ATCC 700492 / JCM 21426 / NBRC 103028 / MMB-1).